A 422-amino-acid chain; its full sequence is Vitamin D3 receptor B (422 aa).

Positions 20–95 form a DNA-binding region, nuclear receptor; sequence PRICGVCGDK…IGMMKEFILT (76 aa). Cysteine 23, cysteine 26, cysteine 40, cysteine 43, cysteine 59, cysteine 65, cysteine 75, and cysteine 78 together coordinate Zn(2+). 2 consecutive NR C4-type zinc fingers follow at residues 23 to 43 and 59 to 78; these read CGVCGDKATGFHFNAMTCEGC and CPFNGSCTITKDNRRHCQAC. The hinge stretch occupies residues 96 to 125; the sequence is DEEVQRKKELIQRRKDEEAHREAQKPRLSD. The segment at 106–128 is disordered; it reads IQRRKDEEAHREAQKPRLSDEQR. An NR LBD domain is found at 126–418; sequence EQRNIIDTLV…LTPLVLEVFG (293 aa). Calcitriol is bound at residue tyrosine 142. Residues 145-190 are disordered; sequence SYSDFSRFRPPVREGPVTRSASRAASLHSLSDASSDSFSHSPESGD. The span at 163 to 185 shows a compositional bias: low complexity; it reads RSASRAASLHSLSDASSDSFSHS. Serine 234 provides a ligand contact to calcitriol. The segment at 243–261 is interaction with coactivator LXXLL motif; the sequence is KMIPGFRELTAEDQIALLK. Calcitriol is bound by residues arginine 271, serine 275, histidine 302, and histidine 392. The 9aaTAD motif lies at 411–419; sequence PLVLEVFGG.

This sequence belongs to the nuclear hormone receptor family. Homodimer in the absence of bound vitamin D3. Heterodimer with RXRA after vitamin D3 binding. Interacts with ncoa1 and possibly other coactivators, leading to a strong increase of transcription of target genes. Detected in embryo 24 to 48 hours after fertilization, and in intestinal bulb.

It is found in the nucleus. It localises to the cytoplasm. Nuclear receptor for calcitriol, the active form of vitamin D3 which mediates the action of this vitamin on cells. Enters the nucleus upon vitamin D3 binding where it forms heterodimers with the retinoid X receptor/RXR. The VDR-RXR heterodimers bind to specific response elements on DNA and activate the transcription of vitamin D3-responsive target genes. Recruited to promoters via its interaction with BAZ1B/WSTF which mediates the interaction with acetylated histones, an essential step for VDR-promoter association. Plays a central role in calcium homeostasis. In Danio rerio (Zebrafish), this protein is Vitamin D3 receptor B (vdrb).